Consider the following 314-residue polypeptide: Cytochrome b558/566 subunit B (314 aa).

Helical transmembrane passes span 47 to 67 (LLLV…LIVS), 76 to 96 (SLIP…IPNY), 102 to 122 (LYSL…EGLI), 127 to 147 (LSIL…ASIL), 155 to 175 (LFIS…AYVI), 186 to 206 (YIAI…ENII), 233 to 253 (HITL…TSLI), and 264 to 284 (FLII…IYML).

The protein resides in the cell membrane. This is Cytochrome b558/566 subunit B (cbsB) from Saccharolobus solfataricus (strain ATCC 35092 / DSM 1617 / JCM 11322 / P2) (Sulfolobus solfataricus).